We begin with the raw amino-acid sequence, 490 residues long: Protein LMBR1L (490 aa).

Over 1 to 21 (MEAPDYEVLSVREQLFHERIR) the chain is Extracellular. The interaction with LGB stretch occupies residues 1-59 (MEAPDYEVLSVREQLFHERIRECIISTLLFATLYILCHIFLTRFKKPAEFTTVDDEDAT). The LCN1-binding stretch occupies residues 1–76 (MEAPDYEVLS…LCTFTLAIAL (76 aa)). A helical membrane pass occupies residues 22–42 (ECIISTLLFATLYILCHIFLT). Residues 43–66 (RFKKPAEFTTVDDEDATVNKIALE) lie on the Cytoplasmic side of the membrane. Residues 67 to 87 (LCTFTLAIALGAVLLLPFSII) traverse the membrane as a helical segment. Residues 88–114 (SNEVLLSLPRNYYIQWLNGSLIHGLWN) are Extracellular-facing. A helical transmembrane segment spans residues 115–135 (LVFLFSNLSLIFLMPFAYFFT). Over 136–154 (ESEGFAGSRRGVLGRVYET) the chain is Cytoplasmic. The helical transmembrane segment at 155-175 (VVMLMLLTLLVLGMVWVASAI) threads the bilayer. Topologically, residues 176-196 (LDNNKASRESLYDFWEYYLPY) are extracellular. A helical transmembrane segment spans residues 197–217 (LYSCISFLGVLLLLVCTPLGL). Over 218–305 (ARMFSVTGKL…NLGYPLAMLC (88 aa)) the chain is Cytoplasmic. The chain crosses the membrane as a helical span at residues 306–326 (LLVLTGLSVLIVAIHILELLI). Topologically, residues 327-350 (DEAAMPRGMQDASLGQVSFSRLGS) are extracellular. A helical membrane pass occupies residues 351–371 (FGAVIQVALIFYLMVSSVVGF). Residues 372-388 (YSSPLFRSLRPRWHDTA) lie on the Cytoplasmic side of the membrane. Residues 389-409 (MTQIIGNCVCLLVLSSALPVF) form a helical membrane-spanning segment. Over 410–431 (SRTLGLTRFDLLGDFGRFNWLG) the chain is Extracellular. Residues 432-452 (NFYIVFLYNAAFAGLTTLCLV) traverse the membrane as a helical segment. Residues 453-490 (KTFTAAVRAELIRAFGLDRLPLPVSGFPPRASRKTQHQ) are Cytoplasmic-facing.

The protein belongs to the LIMR family. In terms of assembly, dimer. Can also form higher oligomers. Interacts with LCN1; this interaction mediates the endocytosis of LCN1. Interacts with UBAC2, FAF2, VCP, AMFR, ZNRF3, CTNNB1, LRP6, GSK3A, GSK3B, FZD6, DVL2 and RNF43. Interaction with LGB and SCGB1A1 is controversial.

It localises to the cell membrane. The protein localises to the endoplasmic reticulum membrane. Functionally, plays an essential role in lymphocyte development by negatively regulating the canonical Wnt signaling pathway. In association with UBAC2 and E3 ubiquitin-protein ligase AMFR, promotes the ubiquitin-mediated degradation of CTNNB1 and Wnt receptors FZD6 and LRP6. LMBR1L stabilizes the beta-catenin destruction complex that is required for regulating CTNNB1 levels. Acts as a LCN1 receptor and can mediate its endocytosis. In Pongo abelii (Sumatran orangutan), this protein is Protein LMBR1L (LMBR1L).